Reading from the N-terminus, the 429-residue chain is Ribosomal RNA small subunit methyltransferase B (429 aa).

S-adenosyl-L-methionine is bound by residues 254-260 (CAAPGGK), Asp277, Asp303, and Asp322. Cys375 serves as the catalytic Nucleophile.

Belongs to the class I-like SAM-binding methyltransferase superfamily. RsmB/NOP family.

The protein resides in the cytoplasm. It catalyses the reaction cytidine(967) in 16S rRNA + S-adenosyl-L-methionine = 5-methylcytidine(967) in 16S rRNA + S-adenosyl-L-homocysteine + H(+). Specifically methylates the cytosine at position 967 (m5C967) of 16S rRNA. This chain is Ribosomal RNA small subunit methyltransferase B, found in Shigella flexneri serotype 5b (strain 8401).